The following is a 185-amino-acid chain: Ribosome-recycling factor (185 aa).

Residues 128-158 are disordered; that stretch reads VRNTRQDANNKVKKLEKDKEISEDESKKAQE.

This sequence belongs to the RRF family.

Its subcellular location is the cytoplasm. Its function is as follows. Responsible for the release of ribosomes from messenger RNA at the termination of protein biosynthesis. May increase the efficiency of translation by recycling ribosomes from one round of translation to another. In Helicobacter pylori (strain J99 / ATCC 700824) (Campylobacter pylori J99), this protein is Ribosome-recycling factor.